The sequence spans 284 residues: Pantothenate synthetase (284 aa).

30 to 37 (MGNLHDGH) provides a ligand contact to ATP. Catalysis depends on His-37, which acts as the Proton donor. Gln-61 contributes to the (R)-pantoate binding site. Residue Gln-61 coordinates beta-alanine. 149 to 152 (GEKD) provides a ligand contact to ATP. Gln-155 contributes to the (R)-pantoate binding site. ATP-binding positions include Ile-178 and 186–189 (LSSR).

It belongs to the pantothenate synthetase family. In terms of assembly, homodimer.

The protein localises to the cytoplasm. It carries out the reaction (R)-pantoate + beta-alanine + ATP = (R)-pantothenate + AMP + diphosphate + H(+). It participates in cofactor biosynthesis; (R)-pantothenate biosynthesis; (R)-pantothenate from (R)-pantoate and beta-alanine: step 1/1. Catalyzes the condensation of pantoate with beta-alanine in an ATP-dependent reaction via a pantoyl-adenylate intermediate. This chain is Pantothenate synthetase, found in Salmonella paratyphi B (strain ATCC BAA-1250 / SPB7).